Consider the following 579-residue polypeptide: Glycine--tRNA ligase (579 aa).

Position 175 (Glu-175) interacts with glycine. ATP contacts are provided by residues 207–209 (RNE) and 218–219 (RV). Glu-226 serves as a coordination point for glycine. ATP is bound at residue 327–328 (EC). 442–444 (EPS) is a binding site for glycine. An ATP-binding site is contributed by Arg-449.

This sequence belongs to the class-II aminoacyl-tRNA synthetase family. Homodimer.

The catalysed reaction is tRNA(Gly) + glycine + ATP = glycyl-tRNA(Gly) + AMP + diphosphate. The enzyme catalyses 2 ATP + H(+) = P(1),P(4)-bis(5'-adenosyl) tetraphosphate + diphosphate. Its function is as follows. Catalyzes the ATP-dependent ligation of glycine to the 3'-end of its cognate tRNA, via the formation of an aminoacyl-adenylate intermediate (Gly-AMP). Also produces diadenosine tetraphosphate (Ap4A), a universal pleiotropic signaling molecule needed for cell regulation pathways, by direct condensation of 2 ATPs. Thereby, may play a special role in Ap4A homeostasis. The sequence is that of Glycine--tRNA ligase from Encephalitozoon cuniculi (strain GB-M1) (Microsporidian parasite).